A 585-amino-acid polypeptide reads, in one-letter code: Zinc finger protein 732 (585 aa).

Residues 4-75 (LTFRDVAIEF…KIHETVAKHP (72 aa)) form the KRAB domain. The segment at 141–163 (FQCNVHVKVFSTFSNSNQRRIRH) adopts a C2H2-type 1; degenerate zinc-finger fold. The C2H2-type 2; degenerate zinc-finger motif lies at 167–189 (KHFKECGKSFQKFSDLTQHQGIH). Residues 195-217 (YTCEECGKDFKWYLIFNEYEIIH) form a C2H2-type 3; degenerate zinc finger. A C2H2-type 4 zinc finger spans residues 223 to 244 (FTCEECGNIFTTSSNFAKHKVH). The C2H2-type 5; degenerate zinc finger occupies 250-272 (YKYEECGKAFNRSSTLTKHKRIH). 9 consecutive C2H2-type zinc fingers follow at residues 278-300 (FTCE…KKIH), 306-328 (YKCQ…NRIH), 334-356 (YTCE…KRIH), 362-384 (YKCE…KSIH), 390-412 (YTCE…KRIH), 418-440 (HKCE…KIIH), 446-468 (YKCE…KKIH), 474-496 (YRCE…KTIH), and 502-524 (YECE…KKIH). The C2H2-type 15; degenerate zinc finger occupies 530–552 (YRCEECGKAFRRSRVLNKYKTIH). The segment at 558-580 (PKCKGCGKAFKWSSYLNQHNKIY) adopts a C2H2-type 16; degenerate zinc-finger fold.

Belongs to the krueppel C2H2-type zinc-finger protein family.

The protein resides in the nucleus. In terms of biological role, may be involved in transcriptional regulation. The chain is Zinc finger protein 732 (ZNF732) from Homo sapiens (Human).